Consider the following 142-residue polypeptide: MKIRLPLLALALGMSSPLVHAQMLQPGLWELTTSNMQVDGKPLPDMAFMLGQLKNLPPEQRAMMEGVLAKQGVTVGGNGVRSCLTPEQVATNDIPLQDPKSGCTQKITDRTGNVWKFQFSCPKAQGSGQATFLSDRELTCRH.

This is an uncharacterized protein from Pseudomonas putida (Arthrobacter siderocapsulatus).